A 497-amino-acid polypeptide reads, in one-letter code: Uridine 5'-monophosphate synthase (497 aa).

The tract at residues 8 to 226 is OPRTase; the sequence is TRNGALKRNL…KLEINSELEN (219 aa). The tract at residues 227–232 is domain linker; it reads LSSLPY. The OMPdecase stretch occupies residues 233–496; that stretch reads VENVRTPLAE…WDALTRSDDS (264 aa). UMP is bound by residues Asp271 and 293 to 295; that span reads KLH. Orotidine 5'-phosphate is bound at residue Lys293. Residues Asp324, Lys326, and Asp329 each act as for OMPdecase activity in the active site. Residues Lys326, Asp329, Thr333, Ser387, 446-448, and 466-467 contribute to the orotidine 5'-phosphate site; these read QQW and GR. UMP is bound by residues Asp329, Thr333, Ser387, 446 to 448, and 466 to 467; these read QQW and GR.

This sequence in the N-terminal section; belongs to the purine/pyrimidine phosphoribosyltransferase family. In the C-terminal section; belongs to the OMP decarboxylase family. Expressed in intestine and in neurons near the nerve ring and rectum.

The protein resides in the cytoplasm. It catalyses the reaction orotidine 5'-phosphate + diphosphate = orotate + 5-phospho-alpha-D-ribose 1-diphosphate. It carries out the reaction orotidine 5'-phosphate + H(+) = UMP + CO2. Its pathway is pyrimidine metabolism; UMP biosynthesis via de novo pathway; UMP from orotate: step 1/2. The protein operates within pyrimidine metabolism; UMP biosynthesis via de novo pathway; UMP from orotate: step 2/2. Its function is as follows. Bifunctional enzyme which catalyzes the formation of UMP from orotate in the de novo pathway of pyrimidine biosynthesis. May also form UMP from uracil. Regulates the size of gut granules during embryonic development. Involved in resistance to DNA damaging agents including UV-C and X-ray radiation. The polypeptide is Uridine 5'-monophosphate synthase (Caenorhabditis elegans).